We begin with the raw amino-acid sequence, 178 residues long: tRNA (cytidine(56)-2'-O)-methyltransferase (178 aa).

S-adenosyl-L-methionine-binding positions include L84, 109-113 (GAEKV), and 127-134 (IGNQPHSE).

The protein belongs to the aTrm56 family. As to quaternary structure, homodimer.

It localises to the cytoplasm. The enzyme catalyses cytidine(56) in tRNA + S-adenosyl-L-methionine = 2'-O-methylcytidine(56) in tRNA + S-adenosyl-L-homocysteine + H(+). Specifically catalyzes the AdoMet-dependent 2'-O-ribose methylation of cytidine at position 56 in tRNAs. The protein is tRNA (cytidine(56)-2'-O)-methyltransferase of Methanococcoides burtonii (strain DSM 6242 / NBRC 107633 / OCM 468 / ACE-M).